Reading from the N-terminus, the 504-residue chain is MNLFSALSLDTLVLLAIILVLLYRYGTCTHGLFKKQGIPGPKPLPFLGTVLNYYKGLWKFDMECYEKYGKTWGLFDGQIPLFVITDPETIKNVLVKECFSVFTNRQDFFPVGIMSKSISLAKDEEWKRYRALLSPTFTSGNLKEMFPVIEQYGDILVKYLRQEAEKGKPVAVKDVLGAYSMDVIISTTFGVNIDSLNNPEDPFVENAKKVLRFDYFDPLSLSVALFPFLTPIYEMLNICMFPKDSIEFFKKFVDRMTENRLDSKQKHRVDFIYLMMEAYNKSKDKDSHKALSEIEITAQSIIFIFAGYETTSSILSFTVYSLATHPDIQKKLQEEIDEALPNKAPPTYDTVMAMEYLDMVLNETLRLYPITNRLQRVCKKDVEINGIYIPKGSTVIIPSYVLHHDPQHWPEPEEFQPERFSKENKGSIDPYVYLPFGNGPRNCIGMRFALMNMKLALIKVLQNFSFQPCKETQIPLKLSRELLLQPVKPIVLKVVPRDAVITGA.

Cysteine 443 is a heme binding site.

This sequence belongs to the cytochrome P450 family. Heme is required as a cofactor.

It is found in the endoplasmic reticulum membrane. It localises to the microsome membrane. It carries out the reaction an organic molecule + reduced [NADPH--hemoprotein reductase] + O2 = an alcohol + oxidized [NADPH--hemoprotein reductase] + H2O + H(+). Functionally, cytochromes P450 are a group of heme-thiolate monooxygenases. In liver microsomes, this enzyme is involved in an NADPH-dependent electron transport pathway. It oxidizes a variety of structurally unrelated compounds, including steroids, fatty acids, and xenobiotics. This chain is Cytochrome P450 3A16 (Cyp3a16), found in Mus musculus (Mouse).